The primary structure comprises 456 residues: Argininosuccinate lyase (456 aa).

It belongs to the lyase 1 family. Argininosuccinate lyase subfamily.

It is found in the cytoplasm. It carries out the reaction 2-(N(omega)-L-arginino)succinate = fumarate + L-arginine. Its pathway is amino-acid biosynthesis; L-arginine biosynthesis; L-arginine from L-ornithine and carbamoyl phosphate: step 3/3. In Listeria innocua serovar 6a (strain ATCC BAA-680 / CLIP 11262), this protein is Argininosuccinate lyase.